Consider the following 341-residue polypeptide: GTP-binding protein REM 2 (341 aa).

The segment covering 1-13 (MHTDLDTDMDADT) has biased composition (acidic residues). Disordered regions lie at residues 1-72 (MHTD…SMPV) and 84-106 (VDEL…GSGE). The segment covering 18 to 32 (LCSSSSRQASPSGTP) has biased composition (polar residues). S27 is subject to Phosphoserine. Residues 43 to 54 (QKPEKLLAELDR) are compositionally biased toward basic and acidic residues. The segment covering 94 to 105 (SSSGSSDSLGSG) has biased composition (low complexity). GTP-binding positions include 122–129 (GESGVGKS), 230–233 (NKSD), and 261–262 (AA). Positions 282–309 (RGRGHAGGQRPEPSSPDGPAPPTRRESL) are disordered. The segment covering 294 to 303 (PSSPDGPAPP) has biased composition (pro residues). A Phosphoserine modification is found at S296.

It belongs to the small GTPase superfamily. RGK family. Expressed in brain and kidney.

The protein localises to the cell membrane. In terms of biological role, binds GTP saturably and exhibits a low intrinsic rate of GTP hydrolysis. This chain is GTP-binding protein REM 2 (Rem2), found in Rattus norvegicus (Rat).